The chain runs to 414 residues: UPF0754 membrane protein tlr2287 (414 aa).

2 helical membrane-spanning segments follow: residues 2-22 (ADIS…IGYF) and 386-406 (AIVR…AGVL).

The protein belongs to the UPF0754 family.

The protein localises to the cell inner membrane. In Thermosynechococcus vestitus (strain NIES-2133 / IAM M-273 / BP-1), this protein is UPF0754 membrane protein tlr2287.